Consider the following 180-residue polypeptide: DNA-directed RNA polymerase subunit omega (180 aa).

The disordered stretch occupies residues 100 to 180 (ISKSGTPILP…NSDDSETTNS (81 aa)). 2 stretches are compositionally biased toward acidic residues: residues 137–151 (EVDVDAELEVGDEET) and 159–180 (AEAETEAETTEVNSDDSETTNS).

It belongs to the RNA polymerase subunit omega family. The RNAP catalytic core consists of 2 alpha, 1 beta, 1 beta' and 1 omega subunit. When a sigma factor is associated with the core the holoenzyme is formed, which can initiate transcription.

The enzyme catalyses RNA(n) + a ribonucleoside 5'-triphosphate = RNA(n+1) + diphosphate. Functionally, promotes RNA polymerase assembly. Latches the N- and C-terminal regions of the beta' subunit thereby facilitating its interaction with the beta and alpha subunits. The chain is DNA-directed RNA polymerase subunit omega from Pelagibacter ubique (strain HTCC1062).